The primary structure comprises 706 residues: Zinc finger and BTB domain-containing protein 17 (706 aa).

Residues 1-12 (LKSLTVLAESPV) enclose the BTB domain. The tract at residues 32–194 (TAARVTQGDS…LLRSGTYSDR (163 aa)) is disordered. The span at 67–78 (EPAEQPDAKEGP) shows a compositional bias: basic and acidic residues. The segment covering 90–106 (AAEASPAAVSPSRPQPA) has biased composition (low complexity). The span at 134–148 (GKEEEGEAMVEDEEE) shows a compositional bias: acidic residues. The segment covering 170–182 (SGSTDSGQENSGE) has biased composition (polar residues). 13 C2H2-type zinc fingers span residues 205–227 (HKCEDCGKEFTHTGNFKRHIRIH), 233–255 (FSCRECNKAFSDPAACKAHEKTH), 261–283 (YGCEECGKSYRLISLLNLHKKRH), 289–311 (YRCDDCGKLFTTSGNLKRHQLVH), 317–339 (YQCDYCGRSFSDPTSKMRHLETH), 345–367 (HKCPHCDKKFNQVGNLKAHLKIH), 373–395 (LKCRECGNEFTTSGNLKRHLRIH), 401–423 (YVCVHCQRQFADPGALQAHVPIH), 427–450 (KPCQCLICGKAFTQASSLIAHVRH), 457–479 (YVCERCGKRFVQSSQLANHIRHH), 485–507 (HKCTVCNKAFVNVGDLSKHIIIH), 513–536 (FLCDKCGRGFNRVDNLRSHVKTVH), and 618–640 (YACDSCGEKFLDATSLAQHVRIH). Residues 680 to 706 (PRDSPQEAPAAPLAPVPLAGEGQAPAE) form a disordered region. Low complexity predominate over residues 687–698 (APAAPLAPVPLA).

This sequence belongs to the krueppel C2H2-type zinc-finger protein family.

It localises to the nucleus. Functionally, transcription factor that can function as an activator or repressor depending on its binding partners, and by targeting negative regulators of cell cycle progression. Plays a critical role in early lymphocyte development, where it is essential to prevent apoptosis in lymphoid precursors, allowing them to survive in response to IL7 and undergo proper lineage commitment. Has been shown to bind to the promoters of adenovirus major late protein and cyclin D1 and activate transcription. Required for early embryonic development during gastrulation. Represses RB1 transcription. This is Zinc finger and BTB domain-containing protein 17 (ZBTB17) from Gallus gallus (Chicken).